A 437-amino-acid polypeptide reads, in one-letter code: Phosphomethylpyrimidine synthase (437 aa).

Substrate-binding positions include N69, M98, Y127, H163, 185–187 (SRG), 226–229 (DACR), and E265. Residue H269 participates in Zn(2+) binding. Position 292 (Y292) interacts with substrate. Residue H333 coordinates Zn(2+). [4Fe-4S] cluster-binding residues include C409, C412, and C416.

Belongs to the ThiC family. The cofactor is [4Fe-4S] cluster.

The enzyme catalyses 5-amino-1-(5-phospho-beta-D-ribosyl)imidazole + S-adenosyl-L-methionine = 4-amino-2-methyl-5-(phosphooxymethyl)pyrimidine + CO + 5'-deoxyadenosine + formate + L-methionine + 3 H(+). It functions in the pathway cofactor biosynthesis; thiamine diphosphate biosynthesis. In terms of biological role, catalyzes the synthesis of the hydroxymethylpyrimidine phosphate (HMP-P) moiety of thiamine from aminoimidazole ribotide (AIR) in a radical S-adenosyl-L-methionine (SAM)-dependent reaction. This is Phosphomethylpyrimidine synthase from Alkaliphilus metalliredigens (strain QYMF).